A 185-amino-acid chain; its full sequence is Elongation factor P (185 aa).

The protein belongs to the elongation factor P family.

The protein resides in the cytoplasm. It functions in the pathway protein biosynthesis; polypeptide chain elongation. In terms of biological role, involved in peptide bond synthesis. Stimulates efficient translation and peptide-bond synthesis on native or reconstituted 70S ribosomes in vitro. Probably functions indirectly by altering the affinity of the ribosome for aminoacyl-tRNA, thus increasing their reactivity as acceptors for peptidyl transferase. This is Elongation factor P from Nitrosomonas europaea (strain ATCC 19718 / CIP 103999 / KCTC 2705 / NBRC 14298).